The chain runs to 426 residues: Glutamyl-tRNA(Gln) amidotransferase subunit D (426 aa).

The Asparaginase/glutaminase domain maps to 82–413; sequence KNISILSTGG…KDAKKLICKN (332 aa). Residues Thr-92, Thr-168, Asp-169, and Lys-245 contribute to the active site.

The protein belongs to the asparaginase 1 family. GatD subfamily. In terms of assembly, heterodimer of GatD and GatE.

It carries out the reaction L-glutamyl-tRNA(Gln) + L-glutamine + ATP + H2O = L-glutaminyl-tRNA(Gln) + L-glutamate + ADP + phosphate + H(+). Its function is as follows. Allows the formation of correctly charged Gln-tRNA(Gln) through the transamidation of misacylated Glu-tRNA(Gln) in organisms which lack glutaminyl-tRNA synthetase. The reaction takes place in the presence of glutamine and ATP through an activated gamma-phospho-Glu-tRNA(Gln). The GatDE system is specific for glutamate and does not act on aspartate. The chain is Glutamyl-tRNA(Gln) amidotransferase subunit D from Methanococcus vannielii (strain ATCC 35089 / DSM 1224 / JCM 13029 / OCM 148 / SB).